A 366-amino-acid polypeptide reads, in one-letter code: RNA 3'-terminal phosphate cyclase (366 aa).

The ATP site is built by glutamine 104, proline 131, tyrosine 294, aspartate 297, glutamine 298, and histidine 320. The active-site Tele-AMP-histidine intermediate is the histidine 320.

It belongs to the RNA 3'-terminal cyclase family. Type 1 subfamily.

The protein resides in the nucleus. It localises to the nucleoplasm. It catalyses the reaction a 3'-end 3'-phospho-ribonucleotide-RNA + ATP = a 3'-end 2',3'-cyclophospho-ribonucleotide-RNA + AMP + diphosphate. In terms of biological role, catalyzes the conversion of 3'-phosphate to a 2',3'-cyclic phosphodiester at the end of RNA. The mechanism of action of the enzyme occurs in 3 steps: (A) adenylation of the enzyme by ATP; (B) transfer of adenylate to an RNA-N3'P to produce RNA-N3'PP5'A; (C) and attack of the adjacent 2'-hydroxyl on the 3'-phosphorus in the diester linkage to produce the cyclic end product. Likely functions in some aspects of cellular RNA processing. Function plays an important role in regulating axon regeneration by inhibiting central nervous system (CNS) axon regeneration following optic nerve injury. The polypeptide is RNA 3'-terminal phosphate cyclase (RTCA) (Bos taurus (Bovine)).